Here is a 786-residue protein sequence, read N- to C-terminus: DNA repair and recombination protein RAD54-like (786 aa).

Residues 2-9 form a required for chromatin remodeling, strand pairing activities and coupling of ATPase activity region; sequence RRSLAPSQ. Thr-22 bears the Phosphothreonine mark. The Helicase ATP-binding domain maps to 165–340; sequence EGKRGSFNGC…FSLVNFVNPE (176 aa). Residue 178–185 participates in ATP binding; sequence DEMGLGKT. Residues 291–294 carry the DEGH box motif; sequence DEGH. Residues 497–654 form the Helicase C-terminal domain; the sequence is LLDFMLAAIR…NNESVEKHFT (158 aa). A disordered region spans residues 738–786; that stretch reads EAKPAATTTDEDEELSDSKRKAKKTLASDDDDDEDFVLNCSSGEEFSGF. Residues 776-786 show a composition bias toward polar residues; it reads NCSSGEEFSGF.

The protein belongs to the SNF2/RAD54 helicase family. In terms of assembly, interacts (via N-terminus) with spn-A/Rad51.

It is found in the nucleus. Its function is as follows. Involved in mitotic DNA repair and meiotic recombination. Functions in the recombinational DNA repair pathway. Essential for interhomolog gene conversion (GC), but may have a less important role in intersister GC than spn-A/Rad51. In the presence of DNA, spn-A/Rad51 enhances the ATPase activity of okr/Rad54. In Drosophila grimshawi (Hawaiian fruit fly), this protein is DNA repair and recombination protein RAD54-like.